A 64-amino-acid chain; its full sequence is Cytochrome c oxidase subunit 2 (64 aa).

Over 1-14 (MAHPSQLGFQDAAS) the chain is Mitochondrial intermembrane. Residues 15 to 45 (PVMEELXHFHDHTLMIVFLISTLVXYIIVAM) traverse the membrane as a helical segment. The Mitochondrial matrix segment spans residues 46–64 (VSTKLTNKYVLDSQEIEIV).

This sequence belongs to the cytochrome c oxidase subunit 2 family. In terms of assembly, component of the cytochrome c oxidase (complex IV, CIV), a multisubunit enzyme composed of 14 subunits. The complex is composed of a catalytic core of 3 subunits MT-CO1, MT-CO2 and MT-CO3, encoded in the mitochondrial DNA, and 11 supernumerary subunits COX4I, COX5A, COX5B, COX6A, COX6B, COX6C, COX7A, COX7B, COX7C, COX8 and NDUFA4, which are encoded in the nuclear genome. The complex exists as a monomer or a dimer and forms supercomplexes (SCs) in the inner mitochondrial membrane with NADH-ubiquinone oxidoreductase (complex I, CI) and ubiquinol-cytochrome c oxidoreductase (cytochrome b-c1 complex, complex III, CIII), resulting in different assemblies (supercomplex SCI(1)III(2)IV(1) and megacomplex MCI(2)III(2)IV(2)). Found in a complex with TMEM177, COA6, COX18, COX20, SCO1 and SCO2. Interacts with TMEM177 in a COX20-dependent manner. Interacts with COX20. Interacts with COX16. Cu cation serves as cofactor.

It is found in the mitochondrion inner membrane. The catalysed reaction is 4 Fe(II)-[cytochrome c] + O2 + 8 H(+)(in) = 4 Fe(III)-[cytochrome c] + 2 H2O + 4 H(+)(out). In terms of biological role, component of the cytochrome c oxidase, the last enzyme in the mitochondrial electron transport chain which drives oxidative phosphorylation. The respiratory chain contains 3 multisubunit complexes succinate dehydrogenase (complex II, CII), ubiquinol-cytochrome c oxidoreductase (cytochrome b-c1 complex, complex III, CIII) and cytochrome c oxidase (complex IV, CIV), that cooperate to transfer electrons derived from NADH and succinate to molecular oxygen, creating an electrochemical gradient over the inner membrane that drives transmembrane transport and the ATP synthase. Cytochrome c oxidase is the component of the respiratory chain that catalyzes the reduction of oxygen to water. Electrons originating from reduced cytochrome c in the intermembrane space (IMS) are transferred via the dinuclear copper A center (CU(A)) of subunit 2 and heme A of subunit 1 to the active site in subunit 1, a binuclear center (BNC) formed by heme A3 and copper B (CU(B)). The BNC reduces molecular oxygen to 2 water molecules using 4 electrons from cytochrome c in the IMS and 4 protons from the mitochondrial matrix. This chain is Cytochrome c oxidase subunit 2 (mt-co2), found in Scaphirhynchus platorynchus (Shovelnose sturgeon).